We begin with the raw amino-acid sequence, 245 residues long: Ubiquinone/menaquinone biosynthesis C-methyltransferase UbiE (245 aa).

S-adenosyl-L-methionine contacts are provided by residues T71, D92, and 118–119; that span reads DA.

This sequence belongs to the class I-like SAM-binding methyltransferase superfamily. MenG/UbiE family.

The catalysed reaction is a 2-demethylmenaquinol + S-adenosyl-L-methionine = a menaquinol + S-adenosyl-L-homocysteine + H(+). It catalyses the reaction a 2-methoxy-6-(all-trans-polyprenyl)benzene-1,4-diol + S-adenosyl-L-methionine = a 5-methoxy-2-methyl-3-(all-trans-polyprenyl)benzene-1,4-diol + S-adenosyl-L-homocysteine + H(+). Its pathway is quinol/quinone metabolism; menaquinone biosynthesis; menaquinol from 1,4-dihydroxy-2-naphthoate: step 2/2. The protein operates within cofactor biosynthesis; ubiquinone biosynthesis. Its function is as follows. Methyltransferase required for the conversion of demethylmenaquinol (DMKH2) to menaquinol (MKH2) and the conversion of 2-polyprenyl-6-methoxy-1,4-benzoquinol (DDMQH2) to 2-polyprenyl-3-methyl-6-methoxy-1,4-benzoquinol (DMQH2). The protein is Ubiquinone/menaquinone biosynthesis C-methyltransferase UbiE of Neisseria meningitidis serogroup B (strain ATCC BAA-335 / MC58).